Consider the following 239-residue polypeptide: Large ribosomal subunit protein mL67 (239 aa).

It belongs to the mitochondrion-specific ribosomal protein mL67 family. As to quaternary structure, component of the mitochondrial large ribosomal subunit (mt-LSU).

The protein resides in the nucleus. It is found in the mitochondrion. Functionally, component of the mitochondrial ribosome (mitoribosome), a dedicated translation machinery responsible for the synthesis of mitochondrial genome-encoded proteins, including at least some of the essential transmembrane subunits of the mitochondrial respiratory chain. The mitoribosomes are attached to the mitochondrial inner membrane and translation products are cotranslationally integrated into the membrane. mL67/MHR1 also has extraribosomal functions, being involved in regulation of mitochondrial DNA recombination, maintenance and repair, and generation of homoplasmic cells. mL67/MHR1 also acts as transcription factor involved in regulation of RNA polymerase II-dependent transcription. This chain is Large ribosomal subunit protein mL67 (MHR1), found in Candida albicans (strain SC5314 / ATCC MYA-2876) (Yeast).